The primary structure comprises 334 residues: Ornithine carbamoyltransferase (334 aa).

Carbamoyl phosphate contacts are provided by residues 56–59 (STRT), Q83, R107, and 134–137 (HPTQ). L-ornithine-binding positions include N168, D232, and 236 to 237 (SM). Residues 274-275 (CL) and R320 each bind carbamoyl phosphate.

The protein belongs to the aspartate/ornithine carbamoyltransferase superfamily. OTCase family.

It is found in the cytoplasm. It catalyses the reaction carbamoyl phosphate + L-ornithine = L-citrulline + phosphate + H(+). It participates in amino-acid biosynthesis; L-arginine biosynthesis; L-arginine from L-ornithine and carbamoyl phosphate: step 1/3. Reversibly catalyzes the transfer of the carbamoyl group from carbamoyl phosphate (CP) to the N(epsilon) atom of ornithine (ORN) to produce L-citrulline. This Shigella boydii serotype 4 (strain Sb227) protein is Ornithine carbamoyltransferase.